Reading from the N-terminus, the 547-residue chain is Apicoplast pyruvate carrier 1 (547 aa).

A disordered region spans residues 1-33 (MEPRAPPRLSVSSPRRESGATVPSHSPSTLLSC). At 1 to 45 (MEPRAPPRLSVSSPRRESGATVPSHSPSTLLSCASSETATEKRRR) the chain is on the cytoplasmic side. Polar residues predominate over residues 21-33 (TVPSHSPSTLLSC). A run of 12 helical transmembrane segments spans residues 46 to 66 (WTGVLSVFGGVLVHVCLGTVY), 126 to 146 (AWVLASQFAGMTLGMPLGGIA), 167 to 187 (VGMAPVLLHSYALFVTVFGVI), 189 to 209 (GVGLGLAYTAPLLCGLAWFPE), 212 to 232 (GIVSGAITAGFGTGALLFSPL), 278 to 298 (LLAVCYLLLVSAGAALLRVPA), 345 to 365 (ALVSWTFWSLWTLFFLNGLAI), 385 to 405 (ILTETQLALVGAAASACNAVG), 417 to 437 (GFQTSLMGLSALWSLLLFFLP), 445 to 465 (LCYALAVSGSFFCLGGNFSVF), 467 to 487 (SAVASVFGPDAIGHLYGFIFG), and 515 to 535 (LMGLCTALTAMSVFCLPALSP).

The protein belongs to the major facilitator superfamily. As to quaternary structure, interacts with apicoplast pyruvate carrier 2.

It localises to the plastid. The protein resides in the apicoplast. The protein localises to the membrane. In terms of biological role, along with apicoplast pyruvate carrier 2, forms apicoplast pyruvate carrier (APC) complex, which transports pyruvate into the apicoplast and may also transport amino acids like methionine, serine, glycine and tryptophan with low efficiency. Required for maintaining pyruvate-dependent metabolic activities in the apicoplast, such as synthesis of fatty acids, isopentenyl pyrophosphate (IPP), dimethylallyl pyrophosphate (DMAPP) and methylerythritol 4-phosphate (MEP). Required for maintaining the integrity of the apicoplast. Required for normal parasite growth. The polypeptide is Apicoplast pyruvate carrier 1 (Toxoplasma gondii).